A 396-amino-acid chain; its full sequence is Tryptophan synthase beta chain (396 aa).

An N6-(pyridoxal phosphate)lysine modification is found at Lys-86.

Belongs to the TrpB family. Tetramer of two alpha and two beta chains. Pyridoxal 5'-phosphate is required as a cofactor.

It carries out the reaction (1S,2R)-1-C-(indol-3-yl)glycerol 3-phosphate + L-serine = D-glyceraldehyde 3-phosphate + L-tryptophan + H2O. It participates in amino-acid biosynthesis; L-tryptophan biosynthesis; L-tryptophan from chorismate: step 5/5. Functionally, the beta subunit is responsible for the synthesis of L-tryptophan from indole and L-serine. In Aliivibrio salmonicida (strain LFI1238) (Vibrio salmonicida (strain LFI1238)), this protein is Tryptophan synthase beta chain.